The primary structure comprises 610 residues: Probable indole-3-acetic acid-amido synthetase GH3.1 (610 aa).

It belongs to the IAA-amido conjugating enzyme family. In terms of tissue distribution, expressed in flowers.

In terms of biological role, may catalyze the synthesis of indole-3-acetic acid (IAA)-amino acid conjugates, providing a mechanism for the plant to cope with the presence of excess auxin. This chain is Probable indole-3-acetic acid-amido synthetase GH3.1 (GH3.1), found in Oryza sativa subsp. japonica (Rice).